The primary structure comprises 208 residues: Small ribosomal subunit protein uS5 (208 aa).

Over residues 1–19 the composition is skewed to polar residues; sequence MTDSNNQSPNKKTSGSSGA. Positions 1–54 are disordered; it reads MTDSNNQSPNKKTSGSSGAPTAADGRQENRRSRGEKRGGRRDRRGQERDSEWQE. 2 stretches are compositionally biased toward basic and acidic residues: residues 25–37 and 44–54; these read GRQE…GEKR and RGQERDSEWQE. The region spanning 52–115 is the S5 DRBM domain; the sequence is WQERVVQIRR…ADGKKHLVRV (64 aa).

It belongs to the universal ribosomal protein uS5 family. In terms of assembly, part of the 30S ribosomal subunit. Contacts proteins S4 and S8.

In terms of biological role, with S4 and S12 plays an important role in translational accuracy. Functionally, located at the back of the 30S subunit body where it stabilizes the conformation of the head with respect to the body. This Prochlorococcus marinus (strain NATL1A) protein is Small ribosomal subunit protein uS5.